The chain runs to 457 residues: Bifunctional protein GlmU (457 aa).

The tract at residues 1–230 is pyrophosphorylase; it reads MSKRYAVVLA…FEESLGVNDR (230 aa). UDP-N-acetyl-alpha-D-glucosamine contacts are provided by residues 9-12, lysine 23, glutamine 73, and 78-79; these read LAAG and GT. Position 103 (aspartate 103) interacts with Mg(2+). UDP-N-acetyl-alpha-D-glucosamine is bound by residues glycine 140, glutamate 155, asparagine 170, and asparagine 228. Asparagine 228 lines the Mg(2+) pocket. The linker stretch occupies residues 231–251; the sequence is IALAEASKLMQRRINDNHMRN. An N-acetyltransferase region spans residues 252–457; that stretch reads GVTLVNPENT…DYAKRLNHGK (206 aa). UDP-N-acetyl-alpha-D-glucosamine contacts are provided by arginine 333 and lysine 351. Histidine 363 acts as the Proton acceptor in catalysis. UDP-N-acetyl-alpha-D-glucosamine is bound by residues tyrosine 366 and asparagine 377. Acetyl-CoA contacts are provided by residues 386–387, alanine 423, and arginine 440; that span reads NY.

The protein in the N-terminal section; belongs to the N-acetylglucosamine-1-phosphate uridyltransferase family. In the C-terminal section; belongs to the transferase hexapeptide repeat family. Homotrimer. Requires Mg(2+) as cofactor.

It is found in the cytoplasm. It carries out the reaction alpha-D-glucosamine 1-phosphate + acetyl-CoA = N-acetyl-alpha-D-glucosamine 1-phosphate + CoA + H(+). It catalyses the reaction N-acetyl-alpha-D-glucosamine 1-phosphate + UTP + H(+) = UDP-N-acetyl-alpha-D-glucosamine + diphosphate. Its pathway is nucleotide-sugar biosynthesis; UDP-N-acetyl-alpha-D-glucosamine biosynthesis; N-acetyl-alpha-D-glucosamine 1-phosphate from alpha-D-glucosamine 6-phosphate (route II): step 2/2. It functions in the pathway nucleotide-sugar biosynthesis; UDP-N-acetyl-alpha-D-glucosamine biosynthesis; UDP-N-acetyl-alpha-D-glucosamine from N-acetyl-alpha-D-glucosamine 1-phosphate: step 1/1. It participates in bacterial outer membrane biogenesis; LPS lipid A biosynthesis. Catalyzes the last two sequential reactions in the de novo biosynthetic pathway for UDP-N-acetylglucosamine (UDP-GlcNAc). The C-terminal domain catalyzes the transfer of acetyl group from acetyl coenzyme A to glucosamine-1-phosphate (GlcN-1-P) to produce N-acetylglucosamine-1-phosphate (GlcNAc-1-P), which is converted into UDP-GlcNAc by the transfer of uridine 5-monophosphate (from uridine 5-triphosphate), a reaction catalyzed by the N-terminal domain. This is Bifunctional protein GlmU from Listeria welshimeri serovar 6b (strain ATCC 35897 / DSM 20650 / CCUG 15529 / CIP 8149 / NCTC 11857 / SLCC 5334 / V8).